Here is a 225-residue protein sequence, read N- to C-terminus: tRNA 2'-phosphotransferase 1 (225 aa).

The segment at 1 to 21 is disordered; sequence MDCETRGRGRRGRGNRNEESR.

This sequence belongs to the KptA/TPT1 family.

It catalyses the reaction 2'-phospho-[ligated tRNA] + NAD(+) = mature tRNA + ADP-alpha-D-ribose 1'',2''-cyclic phosphate + nicotinamide. In terms of biological role, catalyzes the last step of tRNA splicing, the transfer of the splice junction 2'-phosphate from ligated tRNA to NAD to produce ADP-ribose 1''-2'' cyclic phosphate. The protein is tRNA 2'-phosphotransferase 1 (trpt1) of Danio rerio (Zebrafish).